The primary structure comprises 302 residues: Aspartate carbamoyltransferase catalytic subunit (302 aa).

Carbamoyl phosphate-binding residues include R53 and T54. K82 is a binding site for L-aspartate. Carbamoyl phosphate-binding residues include R103, H131, and Q134. 2 residues coordinate L-aspartate: R164 and R223. Carbamoyl phosphate is bound by residues L260 and P261.

It belongs to the aspartate/ornithine carbamoyltransferase superfamily. ATCase family. As to quaternary structure, heterooligomer of catalytic and regulatory chains.

It carries out the reaction carbamoyl phosphate + L-aspartate = N-carbamoyl-L-aspartate + phosphate + H(+). The protein operates within pyrimidine metabolism; UMP biosynthesis via de novo pathway; (S)-dihydroorotate from bicarbonate: step 2/3. Functionally, catalyzes the condensation of carbamoyl phosphate and aspartate to form carbamoyl aspartate and inorganic phosphate, the committed step in the de novo pyrimidine nucleotide biosynthesis pathway. The sequence is that of Aspartate carbamoyltransferase catalytic subunit from Methanococcus maripaludis (strain C5 / ATCC BAA-1333).